The following is a 426-amino-acid chain: Probable glucose-6-phosphate isomerase (426 aa).

The active-site Proton donor is the E272. Residues H293 and K404 contribute to the active site.

It belongs to the GPI family.

It is found in the cytoplasm. The catalysed reaction is alpha-D-glucose 6-phosphate = beta-D-fructose 6-phosphate. Its pathway is carbohydrate biosynthesis; gluconeogenesis. It functions in the pathway carbohydrate degradation; glycolysis; D-glyceraldehyde 3-phosphate and glycerone phosphate from D-glucose: step 2/4. Its function is as follows. Catalyzes the reversible isomerization of glucose-6-phosphate to fructose-6-phosphate. The chain is Probable glucose-6-phosphate isomerase from Halobacterium salinarum (strain ATCC 700922 / JCM 11081 / NRC-1) (Halobacterium halobium).